We begin with the raw amino-acid sequence, 183 residues long: Large ribosomal subunit protein uL6 (183 aa).

The protein belongs to the universal ribosomal protein uL6 family. Part of the 50S ribosomal subunit.

This protein binds to the 23S rRNA, and is important in its secondary structure. It is located near the subunit interface in the base of the L7/L12 stalk, and near the tRNA binding site of the peptidyltransferase center. The protein is Large ribosomal subunit protein uL6 of Chlamydia abortus (strain DSM 27085 / S26/3) (Chlamydophila abortus).